Here is a 552-residue protein sequence, read N- to C-terminus: N-acetylglucosamine-6-sulfatase (552 aa).

Positions 1–36 are cleaved as a signal peptide; the sequence is MRLLPLAPGRLRRGSPRHLPSCSPALLLLVLGGCLG. The Ca(2+) site is built by Asp-55, Asp-56, and Cys-91. The active-site Nucleophile is Cys-91. Cys-91 is subject to 3-oxoalanine (Cys). N-linked (GlcNAc...) asparagine glycans are attached at residues Asn-111, Asn-117, Asn-183, Asn-198, Asn-210, Asn-279, and Asn-317. Ca(2+) contacts are provided by Asp-326 and Asn-327. Residues Asn-362, Asn-387, Asn-405, Asn-422, Asn-449, and Asn-480 are each glycosylated (N-linked (GlcNAc...) asparagine). Phosphoserine is present on Ser-541.

It belongs to the sulfatase family. It depends on Ca(2+) as a cofactor. In terms of processing, the form A (78 kDa) is processed by internal peptidase cleavage to a 32 kDa N-terminal species (form B) and a 48 kDa C-terminal species. The conversion to 3-oxoalanine (also known as C-formylglycine, FGly), of a serine or cysteine residue in prokaryotes and of a cysteine residue in eukaryotes, is critical for catalytic activity.

Its subcellular location is the lysosome. It carries out the reaction Hydrolysis of the 6-sulfate groups of the N-acetyl-D-glucosamine 6-sulfate units of heparan sulfate and keratan sulfate.. Its function is as follows. Hydrolyzes 6-sulfate groups in N-acetyl-d-glucosaminide units of heparin sulfate and keratan sulfate. The sequence is that of N-acetylglucosamine-6-sulfatase (GNS) from Homo sapiens (Human).